A 295-amino-acid chain; its full sequence is Transcriptional regulator SirC (295 aa).

The HTH araC/xylS-type domain occupies 195–292; sequence EKVYNIIISD…KITPLSFMRT (98 aa). 2 DNA-binding regions (H-T-H motif) span residues 212–233 and 259–282; these read AEVA…AAEE and ISQV…KRHF.

Functionally, positive regulator of the expression of the invasion-associated type III secretion system encoded within SPI-1 (pathogenicity island 1). The polypeptide is Transcriptional regulator SirC (sirC) (Salmonella typhimurium (strain SL1344)).